A 531-amino-acid chain; its full sequence is Fe-S cluster assembly factor HCF101, chloroplastic (531 aa).

The N-terminal 62 residues, 1-62 (MRNLRAAAPA…PRRVGRLRRR (62 aa)), are a transit peptide targeting the chloroplast. Residues 17–27 (APPLLLPPSTP) show a composition bias toward pro residues. The disordered stretch occupies residues 17-37 (APPLLLPPSTPTPRGAFSAKA). Residues 28 to 37 (TPRGAFSAKA) are compositionally biased toward low complexity. Residue 181–188 (CKGGVGKS) coordinates ATP.

Belongs to the Mrp/NBP35 ATP-binding proteins family. It depends on [4Fe-4S] cluster as a cofactor.

It localises to the plastid. Its subcellular location is the chloroplast stroma. Required for photosystem I (PSI) biosynthesis and assembly. May serve as a chloroplast scaffold protein that specifically assembles iron-sulfur (4Fe-4S) clusters and transfers them to the chloroplast PSI and ferredoxin-thioredoxin (FTR) complexes. Probably not required for assembly or stability of plastidic 2Fe-2S clusters. This chain is Fe-S cluster assembly factor HCF101, chloroplastic (HCF101), found in Oryza sativa subsp. japonica (Rice).